A 382-amino-acid chain; its full sequence is Na(+)/H(+) antiporter NhaA 2 (382 aa).

11 consecutive transmembrane segments (helical) span residues 7-27 (MVLS…LALL), 58-78 (LDLW…GLEL), 94-114 (SLPI…FAAI), 124-144 (GWAI…MLLG), 153-173 (LFLL…IALF), 178-198 (LSAL…LLNY), 199-219 (YHIT…IAML), 255-275 (NPWV…GIDI), 291-311 (IILG…FIAI), 327-347 (FYGI…IDGL), and 361-381 (LAIL…LKIV).

The protein belongs to the NhaA Na(+)/H(+) (TC 2.A.33) antiporter family.

Its subcellular location is the cell inner membrane. The enzyme catalyses Na(+)(in) + 2 H(+)(out) = Na(+)(out) + 2 H(+)(in). Functionally, na(+)/H(+) antiporter that extrudes sodium in exchange for external protons. This Campylobacter jejuni subsp. jejuni serotype O:6 (strain 81116 / NCTC 11828) protein is Na(+)/H(+) antiporter NhaA 2.